We begin with the raw amino-acid sequence, 530 residues long: Zinc finger protein ZIC 4 (530 aa).

Composition is skewed to basic residues over residues 31–40 (HHPHHHHHPP) and 97–113 (NPHHRHHHHHHHHHHMA). Disordered stretches follow at residues 31 to 50 (HHPHHHHHPPHLPQSVTGYP) and 87 to 138 (PGAL…SYSS). The C2H2-type 1; atypical zinc-finger motif lies at 284 to 317 (LICKWIEEDQLPKKLCSKTFSTMHELVTHVTVEH). The C2H2-type 2; atypical zinc finger occupies 326–353 (HICFWEECPREGKPFKAKYKLVNHIRVH). 3 C2H2-type zinc fingers span residues 359-383 (FPCPFPGCGKVFARSENLKIHKRTH), 389-413 (FKCEFEGCDRRFANSSDRKKHSHVH), and 419-443 (YNCKVRGCDKSYTHPSSLRKHMKVH). Residues 432-530 (HPSSLRKHMK…YSNWQATNTF (99 aa)) form a disordered region. Positions 435-444 (SLRKHMKVHC) are enriched in basic residues. 2 stretches are compositionally biased toward low complexity: residues 455-467 (SSIPSLVSPSSDS) and 474-485 (TSSQPEPPTSSQ). A compositionally biased stretch (polar residues) spans 520–530 (SYSNWQATNTF).

Belongs to the GLI C2H2-type zinc-finger protein family. In terms of tissue distribution, at mid-gastrula stage (stage 11.5), weakly expressed in the prospective neural fold. Expressed in the neural plate border region at early neurula stage (stage 15) with strongest expression in the prospective regions of the hyoid and branchial crests. Expression in the dorsal central nervous system (CNS) continues through late neurula stage and early tail bud stages with expression strongest in the olfactory placode and expression levels increasing as development progresses. Becomes expressed in somites.

Its subcellular location is the nucleus. Functionally, may bind to DNA. Induces neural and neural crest differentiation. Does not induce anterior neural tissue. The polypeptide is Zinc finger protein ZIC 4 (zic4) (Xenopus laevis (African clawed frog)).